The sequence spans 1197 residues: DExH-box ATP-dependent RNA helicase DExH3 (1197 aa).

Residues 309–476 (LKAIAANQVV…FGGAPAMHIP (168 aa)) form the Helicase ATP-binding domain. Residue 322–329 (GETGCGKT) participates in ATP binding. A DEIH box motif is present at residues 423–426 (DEIH). A Helicase C-terminal domain is found at 564-738 (LIENVLCHIV…SLCLQIKSLG (175 aa)).

This sequence belongs to the DExH box helicase family.

The enzyme catalyses ATP + H2O = ADP + phosphate + H(+). The polypeptide is DExH-box ATP-dependent RNA helicase DExH3 (Arabidopsis thaliana (Mouse-ear cress)).